We begin with the raw amino-acid sequence, 335 residues long: NADH-quinone oxidoreductase subunit H (335 aa).

A run of 8 helical transmembrane segments spans residues 11–31, 81–101, 114–134, 154–174, 187–207, 238–258, 270–290, and 307–327; these read VILT…AGAL, VIFT…FAII, IGLL…LFAG, VSYE…VGSF, LWFI…GVAV, FFVG…TLFF, QLSF…FILL, and WKFC…IVLW.

Belongs to the complex I subunit 1 family. In terms of assembly, NDH-1 is composed of 13 different subunits. Subunits NuoA, H, J, K, L, M, N constitute the membrane sector of the complex.

The protein localises to the cell inner membrane. The enzyme catalyses a quinone + NADH + 5 H(+)(in) = a quinol + NAD(+) + 4 H(+)(out). Functionally, NDH-1 shuttles electrons from NADH, via FMN and iron-sulfur (Fe-S) centers, to quinones in the respiratory chain. The immediate electron acceptor for the enzyme in this species is believed to be ubiquinone. Couples the redox reaction to proton translocation (for every two electrons transferred, four hydrogen ions are translocated across the cytoplasmic membrane), and thus conserves the redox energy in a proton gradient. This subunit may bind ubiquinone. This Pseudomonas fluorescens (strain Pf0-1) protein is NADH-quinone oxidoreductase subunit H.